Consider the following 660-residue polypeptide: Acetyl-coenzyme A synthetase (660 aa).

CoA-binding positions include 197–200 (RGGK) and Thr317. Residues 397–399 (GEP), 421–426 (DTWWQT), Asp512, and Arg528 each bind ATP. Position 536 (Ser536) interacts with CoA. Arg539 contributes to the ATP binding site. The Mg(2+) site is built by Val550, His552, and Val555. Lys625 carries the N6-acetyllysine modification.

It belongs to the ATP-dependent AMP-binding enzyme family. It depends on Mg(2+) as a cofactor. In terms of processing, acetylated. Deacetylation by the SIR2-homolog deacetylase activates the enzyme.

It catalyses the reaction acetate + ATP + CoA = acetyl-CoA + AMP + diphosphate. Its function is as follows. Catalyzes the conversion of acetate into acetyl-CoA (AcCoA), an essential intermediate at the junction of anabolic and catabolic pathways. AcsA undergoes a two-step reaction. In the first half reaction, AcsA combines acetate with ATP to form acetyl-adenylate (AcAMP) intermediate. In the second half reaction, it can then transfer the acetyl group from AcAMP to the sulfhydryl group of CoA, forming the product AcCoA. This chain is Acetyl-coenzyme A synthetase, found in Burkholderia thailandensis (strain ATCC 700388 / DSM 13276 / CCUG 48851 / CIP 106301 / E264).